A 218-amino-acid polypeptide reads, in one-letter code: Octanoyltransferase (218 aa).

In terms of domain architecture, BPL/LPL catalytic spans 31-206; sequence REAADEVWLV…QLVKHLDYAE (176 aa). Substrate is bound by residues 70–77, 137–139, and 150–152; these read RGGQVTYH, SLG, and GLA. The active-site Acyl-thioester intermediate is the cysteine 168.

Belongs to the LipB family.

The protein resides in the cytoplasm. It carries out the reaction octanoyl-[ACP] + L-lysyl-[protein] = N(6)-octanoyl-L-lysyl-[protein] + holo-[ACP] + H(+). Its pathway is protein modification; protein lipoylation via endogenous pathway; protein N(6)-(lipoyl)lysine from octanoyl-[acyl-carrier-protein]: step 1/2. Its function is as follows. Catalyzes the transfer of endogenously produced octanoic acid from octanoyl-acyl-carrier-protein onto the lipoyl domains of lipoate-dependent enzymes. Lipoyl-ACP can also act as a substrate although octanoyl-ACP is likely to be the physiological substrate. This Pseudomonas syringae pv. syringae (strain B728a) protein is Octanoyltransferase.